Reading from the N-terminus, the 1108-residue chain is Serine/threonine-protein kinase AKL1 (1108 aa).

N-acetylserine is present on Ser2. At Ser10 the chain carries Phosphoserine. In terms of domain architecture, Protein kinase spans Val35–Glu319. Residues Leu41–Ile49 and Lys70 each bind ATP. The active-site Proton acceptor is the Asp181. A disordered region spans residues Ile405–Ile466. Ser407 carries the post-translational modification Phosphoserine. The segment covering Glu419–Ser435 has biased composition (basic and acidic residues). Over residues Arg436–Asn449 the composition is skewed to low complexity. Thr471 carries the post-translational modification Phosphothreonine. Residues Lys493–Pro513 show a composition bias toward polar residues. Positions Lys493 to Tyr534 are disordered. Ser504 is modified (phosphoserine). Positions Gln514–Tyr534 are enriched in low complexity. Residues Ser541 and Ser574 each carry the phosphoserine modification. The span at Gln590–Gln629 shows a compositional bias: low complexity. Disordered regions lie at residues Gln590–Gly663 and Glu765–Ser791. Residues Asn781–Ser791 are compositionally biased toward polar residues. Phosphoserine is present on Ser801. A disordered region spans residues Ala807–Asn838. Residues Gln810 to Gln819 are compositionally biased toward polar residues. Ser846 is modified (phosphoserine). The tract at residues Gly858–Lys1108 is disordered. Low complexity predominate over residues Ala859–Ser872. Basic and acidic residues predominate over residues Asp910 to Arg934. A compositionally biased stretch (polar residues) spans Ser935–Thr976. A phosphoserine mark is found at Ser953 and Ser960. Basic and acidic residues predominate over residues Glu1006 to Ser1048. Residues Lys1008 and Lys1046 each participate in a glycyl lysine isopeptide (Lys-Gly) (interchain with G-Cter in ubiquitin) cross-link. The residue at position 1048 (Ser1048) is a Phosphoserine. The span at Asn1049–Ser1060 shows a compositional bias: low complexity. The segment covering Gln1071–Ala1082 has biased composition (basic and acidic residues). Residue Ser1072 is modified to Phosphoserine.

This sequence belongs to the protein kinase superfamily. Ser/Thr protein kinase family.

It catalyses the reaction L-seryl-[protein] + ATP = O-phospho-L-seryl-[protein] + ADP + H(+). The enzyme catalyses L-threonyl-[protein] + ATP = O-phospho-L-threonyl-[protein] + ADP + H(+). Its function is as follows. Phosphorylates SCD5. The protein is Serine/threonine-protein kinase AKL1 (AKL1) of Saccharomyces cerevisiae (strain ATCC 204508 / S288c) (Baker's yeast).